Consider the following 201-residue polypeptide: Ras-related protein Rab-9A (201 aa).

N-acetylalanine is present on Ala2. The GTP site is built by Gly17, Val18, Gly19, Lys20, Ser21, Ser22, Asp33, Ser34, His38, and Thr39. Position 21 (Ser21) interacts with Mg(2+). The short motif at 31–42 is the Switch 1 element; that stretch reads KFDSQLFHTIGV. Position 34 is a phosphoserine (Ser34). Mg(2+)-binding residues include Thr39 and Asp62. Residues 64-78 carry the Switch 2 motif; the sequence is AGQERFRSLRTPFYR. GTP-binding residues include Gly65, Asn124, Lys125, Asp127, Ala155, and Lys156. Ser179 carries the phosphoserine modification. Residue Thr187 is modified to Phosphothreonine. Residues Cys200 and Cys201 are each lipidated (S-geranylgeranyl cysteine).

Belongs to the small GTPase superfamily. Rab family. Interacts (preferentially in its GTP-bound form) with GCC2 (via its GRIP domain). Interacts (GTP-bound form) with SGSM1; the GDP-bound form has much lower affinity for SGSM1. Interacts with SGSM2. The GTP-bound form but not the GDP-bound form interacts with HPS4. The GTP-bound form but not the GDP-bound form interacts with BLOC-3 complex (heterodimer of HPS1 and HPS4) but does not interact with HPS1 alone. Interacts (GTP-bound form) with NDE1; two RAB9A-GTP molecules lie on the opposite sides of the NDE1 homodimer; the interaction leads to RAB9A-dynein motor tethering. Interacts (GTP-bound form) with NDEL1. Mg(2+) serves as cofactor.

It localises to the cell membrane. The protein resides in the endoplasmic reticulum membrane. It is found in the golgi apparatus membrane. Its subcellular location is the late endosome. The protein localises to the cytoplasmic vesicle. It localises to the phagosome membrane. The protein resides in the phagosome. It is found in the cytoplasmic vesicle membrane. Its subcellular location is the melanosome. It catalyses the reaction GTP + H2O = GDP + phosphate + H(+). Its activity is regulated as follows. Regulated by guanine nucleotide exchange factors (GEFs) which promote the exchange of bound GDP for free GTP. Regulated by GTPase activating proteins (GAPs) which increase the GTP hydrolysis activity. Inhibited by GDP dissociation inhibitors (GDIs). The small GTPases Rab are key regulators of intracellular membrane trafficking, from the formation of transport vesicles to their fusion with membranes. Rabs cycle between an inactive GDP-bound form and an active GTP-bound form that is able to recruit to membranes different sets of downstream effectors directly responsible for vesicle formation, movement, tethering and fusion. RAB9A is involved in the transport of proteins between the endosomes and the trans-Golgi network (TGN). Specifically uses NDE1/NDEL1 as an effector to interact with the dynein motor complex in order to control retrograde trafficking of RAB9-associated late endosomes to the TGN. Involved in the recruitment of SGSM2 to melanosomes and is required for the proper trafficking of melanogenic enzymes TYR, TYRP1 and DCT/TYRP2 to melanosomes in melanocytes. The sequence is that of Ras-related protein Rab-9A from Mus musculus (Mouse).